A 332-amino-acid polypeptide reads, in one-letter code: Formamidase (332 aa).

The CN hydrolase domain occupies 14 to 259 (FLTALIQYPV…WEIVTAEVYP (246 aa)). Catalysis depends on glutamate 60, which acts as the Proton acceptor. Lysine 132 (proton donor) is an active-site residue. Cysteine 165 acts as the Nucleophile in catalysis.

This sequence belongs to the carbon-nitrogen hydrolase superfamily. Aliphatic amidase family.

It catalyses the reaction formamide + H2O = formate + NH4(+). Is an aliphatic amidase with a restricted substrate specificity, as it only hydrolyzes formamide. The protein is Formamidase of Bacillus cereus (strain B4264).